We begin with the raw amino-acid sequence, 436 residues long: Serine protease hepsin (436 aa).

Residues 1-29 are disordered; that stretch reads MAKEDEEPGAHRGGSTCSRPQPGKGGRTA. Residues 1–38 lie on the Cytoplasmic side of the membrane; it reads MAKEDEEPGAHRGGSTCSRPQPGKGGRTAACCSRPKVA. Residues 39–59 form a helical; Signal-anchor for type II membrane protein membrane-spanning segment; that stretch reads ALIVGTLLFLTGIGAASWAIV. Residues 60–436 are Extracellular-facing; that stretch reads TILLQSDQEP…SEASGMVTQP (377 aa). The region spanning 73–170 is the SRCR domain; it reads VQLSPGDSRL…RGRFLTATCQ (98 aa). 8 cysteine pairs are disulfide-bonded: C96-C159, C109-C169, C138-C157, C172-C296, C207-C223, C310-C378, C341-C357, and C368-C400. N-linked (GlcNAc...) asparagine glycosylation is present at N131. The Peptidase S1 domain occupies 182 to 424; the sequence is IVGGQDSSLG…FREWIFKAIK (243 aa). Residues H222 and D276 each act as charge relay system in the active site. The active-site Charge relay system is S372.

Belongs to the peptidase S1 family. In terms of tissue distribution, detected in kidney, in thick ascending tubule epithelial cells (at protein level). Detected in kidney and liver.

The protein localises to the apical cell membrane. The protein resides in the cell membrane. Its subcellular location is the secreted. The enzyme catalyses Cleavage after basic amino-acid residues, with Arg strongly preferred to Lys.. Functionally, serine protease that cleaves extracellular substrates, and contributes to the proteolytic processing of growth factors, such as HGF and MST1/HGFL. Plays a role in cell growth and maintenance of cell morphology. Plays a role in the proteolytic processing of ACE2. Mediates the proteolytic cleavage of urinary UMOD that is required for UMOD polymerization. The protein is Serine protease hepsin (Hpn) of Mus musculus (Mouse).